Consider the following 341-residue polypeptide: Pre-mRNA-processing protein 45 (341 aa).

3 disordered regions span residues 1-31 (MFSS…HEKS), 181-226 (NYQE…EDQA), and 302-341 (EQHE…KTKY). The span at 192–201 (FKLRKNRHKN) shows a compositional bias: basic residues. The span at 302–318 (EQHEKENKLKELADIAR) shows a compositional bias: basic and acidic residues.

The protein belongs to the SNW family. Associated with the spliceosome.

The protein localises to the nucleus. Functionally, involved in pre-mRNA splicing. The sequence is that of Pre-mRNA-processing protein 45 (PRP45) from Debaryomyces hansenii (strain ATCC 36239 / CBS 767 / BCRC 21394 / JCM 1990 / NBRC 0083 / IGC 2968) (Yeast).